The chain runs to 348 residues: NADH-ubiquinone oxidoreductase chain 2 (348 aa).

11 helical membrane passes run 1 to 21, 25 to 45, 60 to 80, 99 to 119, 124 to 144, 151 to 171, 178 to 197, 202 to 224, 239 to 259, 274 to 294, and 326 to 346; these read MNPYVLMILMSSLGLGTTLTF, HWILAWMGLEINTLAIVPLMA, FLIQAAAAAMILFTSTTNAWI, MFALALKIGLAPMHFWLPEVL, LLTGLILSTWQKLAPMALIIQ, PLILTSLGIASSLIGGWSGLN, ILAYSSIAHMGWMIIVIQYA, LIALGTYIFMTSAAFLTLKVLSA, ILAAIATLVMLSLGGLPPLTG, DLPATATIMALTALLSLFFYL, and LTISVTVTMGLLPLTPAILML.

Belongs to the complex I subunit 2 family. Core subunit of respiratory chain NADH dehydrogenase (Complex I) which is composed of 45 different subunits.

It localises to the mitochondrion inner membrane. It catalyses the reaction a ubiquinone + NADH + 5 H(+)(in) = a ubiquinol + NAD(+) + 4 H(+)(out). Core subunit of the mitochondrial membrane respiratory chain NADH dehydrogenase (Complex I) which catalyzes electron transfer from NADH through the respiratory chain, using ubiquinone as an electron acceptor. Essential for the catalytic activity and assembly of complex I. In Danio rerio (Zebrafish), this protein is NADH-ubiquinone oxidoreductase chain 2 (mt-nd2).